The chain runs to 425 residues: UDP-N-acetylglucosamine 1-carboxyvinyltransferase (425 aa).

Residue 22–23 (KN) participates in phosphoenolpyruvate binding. A UDP-N-acetyl-alpha-D-glucosamine-binding site is contributed by Arg93. Residue Cys117 is the Proton donor of the active site. Cys117 carries the post-translational modification 2-(S-cysteinyl)pyruvic acid O-phosphothioketal. UDP-N-acetyl-alpha-D-glucosamine-binding positions include 122-126 (RPVDL), 162-165 (KVSV), Asp307, and Ile329.

The protein belongs to the EPSP synthase family. MurA subfamily.

It localises to the cytoplasm. It catalyses the reaction phosphoenolpyruvate + UDP-N-acetyl-alpha-D-glucosamine = UDP-N-acetyl-3-O-(1-carboxyvinyl)-alpha-D-glucosamine + phosphate. It functions in the pathway cell wall biogenesis; peptidoglycan biosynthesis. Cell wall formation. Adds enolpyruvyl to UDP-N-acetylglucosamine. This Pasteurella multocida (strain Pm70) protein is UDP-N-acetylglucosamine 1-carboxyvinyltransferase.